The following is a 536-amino-acid chain: Glycine-rich extracellular protein 1 (536 aa).

Positions M1–G22 are cleaved as a signal peptide. Disordered regions lie at residues A111–N134, G306–W336, and G500–C536. Positions F115–K124 are enriched in gly residues. The span at G521–C536 shows a compositional bias: gly residues.

The sequence is that of Glycine-rich extracellular protein 1 from Homo sapiens (Human).